We begin with the raw amino-acid sequence, 1111 residues long: Putative leucine--tRNA ligase, cytoplasmic (1111 aa).

The 'HIGH' region motif lies at 74 to 84 (PYMNGALHLGH). S460 carries the post-translational modification Phosphoserine. The 'KMSKS' region signature appears at 737 to 741 (KMSKS). Residue K740 participates in ATP binding.

This sequence belongs to the class-I aminoacyl-tRNA synthetase family.

Its subcellular location is the cytoplasm. The enzyme catalyses tRNA(Leu) + L-leucine + ATP = L-leucyl-tRNA(Leu) + AMP + diphosphate. This chain is Putative leucine--tRNA ligase, cytoplasmic (lrs1), found in Schizosaccharomyces pombe (strain 972 / ATCC 24843) (Fission yeast).